A 531-amino-acid polypeptide reads, in one-letter code: 2,3-bisphosphoglycerate-independent phosphoglycerate mutase (531 aa).

Mn(2+) contacts are provided by Asp-13 and Ser-63. Ser-63 (phosphoserine intermediate) is an active-site residue. Substrate is bound by residues His-124, 154–155, Arg-187, Arg-193, 261–264, and Lys-342; these read RD and RPDR. Asp-420, His-424, Asp-462, His-463, and His-480 together coordinate Mn(2+).

This sequence belongs to the BPG-independent phosphoglycerate mutase family. As to quaternary structure, monomer. The cofactor is Mn(2+).

It carries out the reaction (2R)-2-phosphoglycerate = (2R)-3-phosphoglycerate. Its pathway is carbohydrate degradation; glycolysis; pyruvate from D-glyceraldehyde 3-phosphate: step 3/5. Its function is as follows. Catalyzes the interconversion of 2-phosphoglycerate and 3-phosphoglycerate. In Mycoplasma mycoides subsp. mycoides SC (strain CCUG 32753 / NCTC 10114 / PG1), this protein is 2,3-bisphosphoglycerate-independent phosphoglycerate mutase.